Reading from the N-terminus, the 561-residue chain is Arginine--tRNA ligase (561 aa).

A 'HIGH' region motif is present at residues 129-139 (ANPTGPLHVGH).

Belongs to the class-I aminoacyl-tRNA synthetase family. In terms of assembly, monomer.

The protein resides in the cytoplasm. The catalysed reaction is tRNA(Arg) + L-arginine + ATP = L-arginyl-tRNA(Arg) + AMP + diphosphate. This Bordetella bronchiseptica (strain ATCC BAA-588 / NCTC 13252 / RB50) (Alcaligenes bronchisepticus) protein is Arginine--tRNA ligase.